A 327-amino-acid polypeptide reads, in one-letter code: ATPase ASNA1 homolog (327 aa).

26-33 (KGGVGKTT) contacts ATP. Aspartate 57 is a catalytic residue. Glutamate 238 and asparagine 265 together coordinate ATP. Zn(2+) contacts are provided by cysteine 274 and cysteine 277.

Belongs to the arsA ATPase family. Homodimer.

Its subcellular location is the cytoplasm. It localises to the endoplasmic reticulum. Functionally, ATPase required for the post-translational delivery of tail-anchored (TA) proteins to the endoplasmic reticulum. Recognizes and selectively binds the transmembrane domain of TA proteins in the cytosol. This complex then targets to the endoplasmic reticulum by membrane-bound receptors, where the tail-anchored protein is released for insertion. This process is regulated by ATP binding and hydrolysis. ATP binding drives the homodimer towards the closed dimer state, facilitating recognition of newly synthesized TA membrane proteins. ATP hydrolysis is required for insertion. Subsequently, the homodimer reverts towards the open dimer state, lowering its affinity for the membrane-bound receptor, and returning it to the cytosol to initiate a new round of targeting. This Entamoeba histolytica (strain ATCC 30459 / HM-1:IMSS / ABRM) protein is ATPase ASNA1 homolog.